The following is a 256-amino-acid chain: Protein FixA (256 aa).

This sequence belongs to the ETF beta-subunit/FixA family. Heterodimer of FixA and FixB.

It participates in amine and polyamine metabolism; carnitine metabolism. Its function is as follows. Required for anaerobic carnitine reduction. May bring reductant to CaiA. The polypeptide is Protein FixA (Salmonella dublin (strain CT_02021853)).